Here is an 82-residue protein sequence, read N- to C-terminus: Turripeptide Gsg9.1 (82 aa).

Residues 1 to 23 form the signal peptide; that stretch reads MMAKLMITVMTVFFLSLQQGADG. Residues 24 to 46 constitute a propeptide that is removed on maturation; sequence LFERWRKNQMAASRIMGNLITAR. 4-hydroxyproline occurs at positions 49 and 50. Cystine bridges form between C53/C68, C58/C72, and C64/C79. 4-carboxyglutamate is present on residues E60 and E63.

Belongs to the Pg turripeptide superfamily. Expressed by the venom duct.

It localises to the secreted. The chain is Turripeptide Gsg9.1 from Gemmula sogodensis (Gem-turris).